We begin with the raw amino-acid sequence, 363 residues long: MQNNLISHINLRNFRNYEYQSISFTDGLNLIRGDNGQGKTNLAEAIYFLSGFGSHRTYKNQPLIKSGEQKAEISAKIQSKYGTRNVYIGISCNSNNILKVDGKPSKLRDLVSVFSCVIFSPEDIDLVKGDPGHRRKYLDDIICRARPMMLDIYSAYDRTLKQRNSLLKSFRKSSCKSDLLDIWTQKLVELGLEIVNARKRLLKILNPKISEFYSKLAGVSSTAELFCQSSDCLIDTFDLLRDREIEEGVTLAGPHRDNVDILLNSCPARSQSSQGESWTLALSMKLSLIELMRETKRLYDPDPVVILDDVFAHLDSYRKQKLAQEVFSYEQTIVTTTDNSDNYRTSQTLVVEEGKVFSENKKG.

Residue 33–40 (GDNGQGKT) coordinates ATP.

It belongs to the RecF family.

Its subcellular location is the cytoplasm. The RecF protein is involved in DNA metabolism; it is required for DNA replication and normal SOS inducibility. RecF binds preferentially to single-stranded, linear DNA. It also seems to bind ATP. The chain is DNA replication and repair protein RecF from Tropheryma whipplei (strain TW08/27) (Whipple's bacillus).